Here is a 94-residue protein sequence, read N- to C-terminus: Integration host factor subunit beta (94 aa).

It belongs to the bacterial histone-like protein family. Heterodimer of an alpha and a beta chain.

Functionally, this protein is one of the two subunits of integration host factor, a specific DNA-binding protein that functions in genetic recombination as well as in transcriptional and translational control. The protein is Integration host factor subunit beta of Haemophilus influenzae (strain PittGG).